The chain runs to 77 residues: Conotoxin Mr8.2 (77 aa).

Residues 1 to 16 (MLRLITAAVLVSACLA) form the signal peptide. Positions 17-32 (YPQKKRTPPQTRPTSR) are excised as a propeptide.

This sequence belongs to the conotoxin B2 family. Post-translationally, contains 5 disulfide bonds. As to expression, expressed by the venom duct.

The protein resides in the secreted. The protein is Conotoxin Mr8.2 of Conus marmoreus (Marble cone).